A 478-amino-acid polypeptide reads, in one-letter code: Phenylalanine--tRNA ligase alpha subunit (478 aa).

Residues Thr-318, 357-359, and Tyr-397 contribute to the L-phenylalanine site; that span reads QLE. Mg(2+) is bound at residue Glu-399. Residue Phe-422 participates in L-phenylalanine binding.

The protein belongs to the class-II aminoacyl-tRNA synthetase family. Phe-tRNA synthetase alpha subunit type 2 subfamily. In terms of assembly, tetramer of two alpha and two beta subunits. Mg(2+) serves as cofactor.

It localises to the cytoplasm. The catalysed reaction is tRNA(Phe) + L-phenylalanine + ATP = L-phenylalanyl-tRNA(Phe) + AMP + diphosphate + H(+). The chain is Phenylalanine--tRNA ligase alpha subunit from Methanospirillum hungatei JF-1 (strain ATCC 27890 / DSM 864 / NBRC 100397 / JF-1).